A 193-amino-acid chain; its full sequence is ATP-dependent protease subunit HslV (193 aa).

Thr12 is an active-site residue. Positions 167, 170, and 173 each coordinate Na(+).

The protein belongs to the peptidase T1B family. HslV subfamily. As to quaternary structure, a double ring-shaped homohexamer of HslV is capped on each side by a ring-shaped HslU homohexamer. The assembly of the HslU/HslV complex is dependent on binding of ATP.

The protein resides in the cytoplasm. It catalyses the reaction ATP-dependent cleavage of peptide bonds with broad specificity.. Its activity is regulated as follows. Allosterically activated by HslU binding. Functionally, protease subunit of a proteasome-like degradation complex believed to be a general protein degrading machinery. This is ATP-dependent protease subunit HslV from Bartonella quintana (strain Toulouse) (Rochalimaea quintana).